The following is a 285-amino-acid chain: 4-diphosphocytidyl-2-C-methyl-D-erythritol kinase (285 aa).

Residue lysine 12 is part of the active site. 94-104 (PAQAGMGGGSS) provides a ligand contact to ATP. The active site involves aspartate 136.

This sequence belongs to the GHMP kinase family. IspE subfamily.

It carries out the reaction 4-CDP-2-C-methyl-D-erythritol + ATP = 4-CDP-2-C-methyl-D-erythritol 2-phosphate + ADP + H(+). It participates in isoprenoid biosynthesis; isopentenyl diphosphate biosynthesis via DXP pathway; isopentenyl diphosphate from 1-deoxy-D-xylulose 5-phosphate: step 3/6. Its function is as follows. Catalyzes the phosphorylation of the position 2 hydroxy group of 4-diphosphocytidyl-2C-methyl-D-erythritol. In Paracidovorax citrulli (strain AAC00-1) (Acidovorax citrulli), this protein is 4-diphosphocytidyl-2-C-methyl-D-erythritol kinase.